Consider the following 322-residue polypeptide: Undecaprenyl-phosphate 4-deoxy-4-formamido-L-arabinose transferase (322 aa).

At 1–235 (MFEIHPVKKV…TCLTTTPLRM (235 aa)) the chain is on the cytoplasmic side. The helical transmembrane segment at 236-256 (LSLLGSIIAIGGFSIAVLLVI) threads the bilayer. The Periplasmic portion of the chain corresponds to 257 to 269 (LRLTFGPQWAAEG). A helical transmembrane segment spans residues 270 to 290 (VFMLFAVLFTFIGAQFIGMGL). Residues 291–322 (LGEYIGRIYTDVRARPRYFVQQVIRPSSKENE) lie on the Cytoplasmic side of the membrane.

It belongs to the glycosyltransferase 2 family.

It localises to the cell inner membrane. The catalysed reaction is UDP-4-deoxy-4-formamido-beta-L-arabinose + di-trans,octa-cis-undecaprenyl phosphate = 4-deoxy-4-formamido-alpha-L-arabinopyranosyl di-trans,octa-cis-undecaprenyl phosphate + UDP. The protein operates within glycolipid biosynthesis; 4-amino-4-deoxy-alpha-L-arabinose undecaprenyl phosphate biosynthesis; 4-amino-4-deoxy-alpha-L-arabinose undecaprenyl phosphate from UDP-4-deoxy-4-formamido-beta-L-arabinose and undecaprenyl phosphate: step 1/2. It participates in bacterial outer membrane biogenesis; lipopolysaccharide biosynthesis. Functionally, catalyzes the transfer of 4-deoxy-4-formamido-L-arabinose from UDP to undecaprenyl phosphate. The modified arabinose is attached to lipid A and is required for resistance to polymyxin and cationic antimicrobial peptides. The polypeptide is Undecaprenyl-phosphate 4-deoxy-4-formamido-L-arabinose transferase (Shigella flexneri).